Consider the following 349-residue polypeptide: Ribosomal RNA small subunit methyltransferase H (349 aa).

Residues 34–36, aspartate 54, phenylalanine 81, aspartate 102, and glutamine 109 each bind S-adenosyl-L-methionine; that span reads GGH. Positions 328–349 are disordered; that stretch reads SRTGSVQHGQAKHKGVVQRGGS.

The protein belongs to the methyltransferase superfamily. RsmH family.

Its subcellular location is the cytoplasm. The catalysed reaction is cytidine(1402) in 16S rRNA + S-adenosyl-L-methionine = N(4)-methylcytidine(1402) in 16S rRNA + S-adenosyl-L-homocysteine + H(+). Specifically methylates the N4 position of cytidine in position 1402 (C1402) of 16S rRNA. The protein is Ribosomal RNA small subunit methyltransferase H of Dehalococcoides mccartyi (strain ATCC BAA-2100 / JCM 16839 / KCTC 5957 / BAV1).